Consider the following 193-residue polypeptide: Peptidyl-tRNA hydrolase (193 aa).

His17 is a binding site for tRNA. His22 (proton acceptor) is an active-site residue. TRNA is bound by residues Phe68, Asn70, and Asn116.

This sequence belongs to the PTH family. As to quaternary structure, monomer.

It is found in the cytoplasm. The catalysed reaction is an N-acyl-L-alpha-aminoacyl-tRNA + H2O = an N-acyl-L-amino acid + a tRNA + H(+). Its function is as follows. Hydrolyzes ribosome-free peptidyl-tRNAs (with 1 or more amino acids incorporated), which drop off the ribosome during protein synthesis, or as a result of ribosome stalling. Functionally, catalyzes the release of premature peptidyl moieties from peptidyl-tRNA molecules trapped in stalled 50S ribosomal subunits, and thus maintains levels of free tRNAs and 50S ribosomes. The polypeptide is Peptidyl-tRNA hydrolase (Xanthomonas campestris pv. campestris (strain 8004)).